A 234-amino-acid chain; its full sequence is Sugar fermentation stimulation protein A (234 aa).

Positions 201–220 form a DNA-binding region, H-T-H motif; it reads LLSEAQNKGVEVLAYKAELS.

Belongs to the SfsA family.

Functionally, binds to DNA non-specifically. Could be a regulatory factor involved in maltose metabolism. This chain is Sugar fermentation stimulation protein A, found in Salmonella arizonae (strain ATCC BAA-731 / CDC346-86 / RSK2980).